The following is a 166-amino-acid chain: uncharacterized protein (166 aa).

The segment at 25–116 (PEEPPLWVPP…QGADEVHSQH (92 aa)) is disordered. Residue serine 105 is modified to Phosphoserine.

This is an uncharacterized protein from Rattus norvegicus (Rat).